The following is a 610-amino-acid chain: Alpha-fetoprotein (610 aa).

Residues 1–18 (MKWVVSIFLIVLLNFTES) form the signal peptide. 3 Albumin domains span residues 19–210 (RTMH…ASIT), 211–403 (KELR…EELE), and 404–602 (KYIQ…ALIS). Histidine 22 is a Cu(2+) binding site. 8 disulfides stabilise this stretch: cysteine 99/cysteine 114, cysteine 113/cysteine 124, cysteine 148/cysteine 193, cysteine 192/cysteine 201, cysteine 224/cysteine 270, cysteine 269/cysteine 277, cysteine 289/cysteine 303, and cysteine 302/cysteine 314. Phosphoserine occurs at positions 111, 115, and 117. Residue asparagine 251 is glycosylated (N-linked (GlcNAc...) asparagine). The residue at position 345 (serine 345) is a Phosphoserine. Cystine bridges form between cysteine 385/cysteine 394, cysteine 417/cysteine 463, cysteine 462/cysteine 473, cysteine 486/cysteine 502, cysteine 501/cysteine 512, cysteine 539/cysteine 584, and cysteine 583/cysteine 592.

This sequence belongs to the ALB/AFP/VDB family. In terms of assembly, dimeric and trimeric forms have been found in addition to the monomeric form. In terms of tissue distribution, plasma. Synthesized by the fetal liver and yolk sac.

Its subcellular location is the secreted. Its function is as follows. Binds copper, nickel, and fatty acids as well as, and bilirubin less well than, serum albumin. This chain is Alpha-fetoprotein (AFP), found in Sus scrofa (Pig).